We begin with the raw amino-acid sequence, 511 residues long: L-aspartate oxidase (511 aa).

Residues 16-19 (AGLA) and 48-55 (SSAWAQGG) each bind FAD. Residue arginine 282 is the Proton donor/acceptor of the active site. FAD-binding positions include glutamate 365 and 381–382 (SL).

It belongs to the FAD-dependent oxidoreductase 2 family. NadB subfamily. FAD serves as cofactor.

The protein localises to the cytoplasm. The catalysed reaction is L-aspartate + O2 = iminosuccinate + H2O2. Its pathway is cofactor biosynthesis; NAD(+) biosynthesis; iminoaspartate from L-aspartate (oxidase route): step 1/1. Functionally, catalyzes the oxidation of L-aspartate to iminoaspartate, the first step in the de novo biosynthesis of NAD(+). This is L-aspartate oxidase (nadB) from Caulobacter vibrioides (strain ATCC 19089 / CIP 103742 / CB 15) (Caulobacter crescentus).